A 142-amino-acid polypeptide reads, in one-letter code: RNA-directed DNA polymerase homolog (142 aa).

The protein localises to the mitochondrion. It catalyses the reaction RNA(n) + a ribonucleoside 5'-triphosphate = RNA(n+1) + diphosphate. This is RNA-directed DNA polymerase homolog from Oenothera berteroana (Bertero's evening primrose).